The primary structure comprises 100 residues: MTPWFLYLIRTADNKLYTGITTDVERRYQQHQSGKGAKALRGKGELTLAFSAPVGDRSLALRAEYRVKQLTKRQKERLVAEGAGFAELLSSLQTPKVKSD.

The GIY-YIG domain maps to 2 to 77 (TPWFLYLIRT…KQLTKRQKER (76 aa)).

It belongs to the UPF0213 family.

In Escherichia coli O17:K52:H18 (strain UMN026 / ExPEC), this protein is UPF0213 protein YhbQ.